The primary structure comprises 197 residues: Small ribosomal subunit protein uS4A (197 aa).

Residues 107-181 (RRLQTQVYKL…VARRNAARKA (75 aa)) enclose the S4 RNA-binding domain. A disordered region spans residues 160–197 (PTSPFGGARPGRVARRNAARKAEASGEAADEADEADEE). K180 participates in a covalent cross-link: Glycyl lysine isopeptide (Lys-Gly) (interchain with G-Cter in ubiquitin). A Phosphoserine modification is found at S184. Residues 187-197 (AADEADEADEE) show a composition bias toward acidic residues.

The protein belongs to the universal ribosomal protein uS4 family. In terms of assembly, component of the small ribosomal subunit (SSU). Mature yeast ribosomes consist of a small (40S) and a large (60S) subunit. The 40S small subunit contains 1 molecule of ribosomal RNA (18S rRNA) and 33 different proteins (encoded by 57 genes). The large 60S subunit contains 3 rRNA molecules (25S, 5.8S and 5S rRNA) and 46 different proteins (encoded by 81 genes). Interacts with snoRNA U3. uS11 interacts with MPP10. Component of the ribosomal small subunit (SSU) processome composed of at least 40 protein subunits and snoRNA U3.

Its subcellular location is the cytoplasm. The protein localises to the nucleus. It is found in the nucleolus. Component of the ribosome, a large ribonucleoprotein complex responsible for the synthesis of proteins in the cell. The small ribosomal subunit (SSU) binds messenger RNAs (mRNAs) and translates the encoded message by selecting cognate aminoacyl-transfer RNA (tRNA) molecules. The large subunit (LSU) contains the ribosomal catalytic site termed the peptidyl transferase center (PTC), which catalyzes the formation of peptide bonds, thereby polymerizing the amino acids delivered by tRNAs into a polypeptide chain. The nascent polypeptides leave the ribosome through a tunnel in the LSU and interact with protein factors that function in enzymatic processing, targeting, and the membrane insertion of nascent chains at the exit of the ribosomal tunnel. uS4 is involved in nucleolar processing of pre-18S ribosomal RNA and ribosome assembly. This Saccharomyces cerevisiae (strain ATCC 204508 / S288c) (Baker's yeast) protein is Small ribosomal subunit protein uS4A.